The following is a 213-amino-acid chain: Proteasome subunit beta (213 aa).

A propeptide spans 1-11 (removed in mature form; by autocatalysis); that stretch reads MSMIEEKIYKG. Thr-12 (nucleophile) is an active-site residue.

The protein belongs to the peptidase T1B family. As to quaternary structure, the 20S proteasome core is composed of 14 alpha and 14 beta subunits that assemble into four stacked heptameric rings, resulting in a barrel-shaped structure. The two inner rings, each composed of seven catalytic beta subunits, are sandwiched by two outer rings, each composed of seven alpha subunits. The catalytic chamber with the active sites is on the inside of the barrel. Has probably a gated structure, the ends of the cylinder being occluded by the N-termini of the alpha-subunits. Is likely capped at one or both ends by the proteasome regulatory ATPase, PAN.

The protein resides in the cytoplasm. It catalyses the reaction Cleavage of peptide bonds with very broad specificity.. Its activity is regulated as follows. The formation of the proteasomal ATPase PAN-20S proteasome complex, via the docking of the C-termini of PAN into the intersubunit pockets in the alpha-rings, triggers opening of the gate for substrate entry. Interconversion between the open-gate and close-gate conformations leads to a dynamic regulation of the 20S proteasome proteolysis activity. In terms of biological role, component of the proteasome core, a large protease complex with broad specificity involved in protein degradation. The polypeptide is Proteasome subunit beta (Archaeoglobus fulgidus (strain ATCC 49558 / DSM 4304 / JCM 9628 / NBRC 100126 / VC-16)).